Reading from the N-terminus, the 197-residue chain is A-type ATP synthase subunit E (197 aa).

The protein belongs to the V-ATPase E subunit family. Has multiple subunits with at least A(3), B(3), C, D, E, F, H, I and proteolipid K(x).

Its subcellular location is the cell membrane. Its function is as follows. Component of the A-type ATP synthase that produces ATP from ADP in the presence of a proton gradient across the membrane. The chain is A-type ATP synthase subunit E from Thermococcus gammatolerans (strain DSM 15229 / JCM 11827 / EJ3).